Reading from the N-terminus, the 776-residue chain is Rho guanine nucleotide exchange factor 6 (776 aa).

The Calponin-homology (CH) domain occupies Met1 to Glu111. The tract at residues Ser115–Lys151 is disordered. The span at Arg121 to Lys151 shows a compositional bias: polar residues. At Ser126 the chain carries Phosphoserine. Thr133 carries the phosphothreonine modification. Ser144 and Ser150 each carry phosphoserine. In terms of domain architecture, SH3 spans Ser160 to Ser219. Ser225 carries the post-translational modification Phosphoserine. In terms of domain architecture, DH spans Tyr241 to Leu421. In terms of domain architecture, PH spans Asp443 to Arg548. Phosphoserine is present on Ser488. Over residues Ser561 to Ser572 the composition is skewed to low complexity. The interval Ser561–Glu581 is disordered. 2 positions are modified to phosphoserine: Ser640 and Ser684.

In terms of assembly, interacts with PAK kinases through the SH3 domain. Interacts with GIT1. Component of cytoplasmic complexes, which also contain PXN, GIT1 and PAK1. Interacts with PARVB. Interacts with BIN2. Identified in a complex with BIN2 and GIT2. Interacts with PARVG; the guanine nucleotide exchange factor activity of ARHGEF6 is essential for PARVG-induced enhancement of cell spreading. As to expression, ubiquitous.

The protein resides in the cell projection. The protein localises to the lamellipodium. Acts as a RAC1 guanine nucleotide exchange factor (GEF). The chain is Rho guanine nucleotide exchange factor 6 (ARHGEF6) from Homo sapiens (Human).